The primary structure comprises 1166 residues: Zinc finger CCHC domain-containing protein 2 (1166 aa).

Disordered stretches follow at residues 1-85, 205-240, 550-668, and 904-982; these read MLRM…GGHA, RAEG…CAKL, SSAD…ARFS, and PASF…ISAV. Positions 43–64 are enriched in pro residues; that stretch reads PPPPPTGLPRGPPPPPSPPRGL. Positions 65-76 are enriched in low complexity; sequence EPPVASGPTAGA. The span at 214–223 shows a compositional bias: acidic residues; it reads EDEPSGDGEQ. A compositionally biased stretch (basic and acidic residues) spans 572–587; that stretch reads PQVEKEKVKKTEDRLN. Positions 624–633 are enriched in low complexity; that stretch reads SSESYSSPSS. Over residues 634–653 the composition is skewed to basic and acidic residues; that stretch reads PRHDGRESLESEEEKDRDSD. Residues 919 to 947 show a composition bias toward polar residues; sequence LPTQNSSALNAATSAQPASTGISPSQSTV. The span at 949–963 shows a compositional bias: pro residues; it reads PAVPTHTPGPAPSPS. Over residues 964-982 the composition is skewed to polar residues; the sequence is PALTHSTAQSDSTSYISAV. A CCHC-type zinc finger spans residues 1119–1136; it reads VSCYNCGVSGHYAQDCKQ.

This Mus musculus (Mouse) protein is Zinc finger CCHC domain-containing protein 2 (Zcchc2).